Consider the following 207-residue polypeptide: PPYTITYFPVRGRCEAMRMLLADQDQSWKEEVVTMETWPPLKPSCLFRQLPKFQDGDLTLYQSNAILRHLGRSFGLYGKDQKEAALVDMVNDGVEDLRCKYATLIYTNYEAGKEKYVKELPEHLKPFETLLSQNQGGQAFVVGSQISFADYNLLDLLRIHQVLNPSCLDAFPLLSAYVARLSARPKIKAFLASPEHVNRPINGNGKN.

Residues 1-78 enclose the GST N-terminal domain; sequence PPYTITYFPV…HLGRSFGLYG (78 aa). Tyrosine 3 carries the post-translational modification Phosphotyrosine; by EGFR. Glutathione contacts are provided by residues tyrosine 7, arginine 13, tryptophan 38, lysine 42, and 49–50; that span reads QL. Threonine 59 bears the Phosphothreonine mark. A glutathione-binding site is contributed by 62 to 63; it reads QS. The GST C-terminal domain occupies 80 to 201; the sequence is DQKEAALVDM…ASPEHVNRPI (122 aa). N6-succinyllysine is present on residues lysine 100 and lysine 113. N6-acetyllysine is present on lysine 125.

This sequence belongs to the GST superfamily. Pi family. Homodimer. Interacts with CDK5.

The protein resides in the cytoplasm. It is found in the mitochondrion. Its subcellular location is the nucleus. It catalyses the reaction RX + glutathione = an S-substituted glutathione + a halide anion + H(+). It carries out the reaction prostaglandin J2 + glutathione = prostaglandin J2-S-(R)-glutathione. The catalysed reaction is prostaglandin J2 + glutathione = prostaglandin J2-S-(S)-glutathione. The enzyme catalyses prostaglandin A2 + glutathione = prostaglandin A2-S-(S)-glutathione. It catalyses the reaction 11(S)-hydroxy-14(S),15(S)-epoxy-(5Z,8Z,12E)-eicosatrienoate + glutathione = (11S,15S)-dihydroxy-14(R)-S-glutathionyl-(5Z,8Z,12E)-eicosatrienoate. Conjugation of reduced glutathione to a wide number of exogenous and endogenous hydrophobic electrophiles. Involved in the formation of glutathione conjugates of both prostaglandin A2 (PGA2) and prostaglandin J2 (PGJ2). Participates in the formation of novel hepoxilin regioisomers. Negatively regulates CDK5 activity via p25/p35 translocation to prevent neurodegeneration. The polypeptide is Glutathione S-transferase P (GSTP1) (Sus scrofa (Pig)).